Consider the following 232-residue polypeptide: Histone H1-II (232 aa).

Low complexity predominate over residues 1-18; the sequence is MSDPAPEVAPAAPVASPA. Disordered stretches follow at residues 1–44 and 103–232; these read MSDP…PPVS and GKGA…AKKA. One can recognise an H15 domain in the interval 39–114; the sequence is THPPVSEMVV…GASGSFKLPA (76 aa). 2 stretches are compositionally biased toward basic residues: residues 149–171 and 179–232; these read SIAK…KSTK and AAKK…AKKA.

This sequence belongs to the histone H1/H5 family.

The protein resides in the nucleus. It localises to the chromosome. Its function is as follows. Histones H1 are necessary for the condensation of nucleosome chains into higher-order structures. The chain is Histone H1-II from Glyptotendipes barbipes (Midge).